The primary structure comprises 484 residues: Glutamate--tRNA ligase (484 aa).

The 'HIGH' region signature appears at 11 to 21; it reads PSPTGYLHIGN. Positions 252–256 match the 'KMSKS' region motif; sequence KLSKR. K255 is an ATP binding site.

The protein belongs to the class-I aminoacyl-tRNA synthetase family. Glutamate--tRNA ligase type 1 subfamily. Monomer.

It localises to the cytoplasm. It carries out the reaction tRNA(Glu) + L-glutamate + ATP = L-glutamyl-tRNA(Glu) + AMP + diphosphate. Catalyzes the attachment of glutamate to tRNA(Glu) in a two-step reaction: glutamate is first activated by ATP to form Glu-AMP and then transferred to the acceptor end of tRNA(Glu). This Staphylococcus saprophyticus subsp. saprophyticus (strain ATCC 15305 / DSM 20229 / NCIMB 8711 / NCTC 7292 / S-41) protein is Glutamate--tRNA ligase.